Here is a 638-residue protein sequence, read N- to C-terminus: Growth hormone receptor (638 aa).

The first 18 residues, 1 to 18 (MDLWRVFLTLALAVSSDM), serve as a signal peptide directing secretion. Residues 19-265 (FPGSGATPAT…TLAACEEDFR (247 aa)) lie on the Extracellular side of the membrane. 2 disulfide bridges follow: Cys56/Cys66 and Cys101/Cys112. Residue Asn115 is glycosylated (N-linked (GlcNAc...) asparagine). Cys126 and Cys140 are oxidised to a cystine. A Fibronectin type-III domain is found at 151-254 (PPIGLNWTLL…EVLRVTFPQM (104 aa)). N-linked (GlcNAc...) asparagine glycosylation is found at Asn156, Asn161, and Asn200. A WSXWS motif motif is present at residues 240-244 (YSEFS). A helical transmembrane segment spans residues 266 to 289 (FPWFLIIIFGIFGVAVMLFVVIFS). The Cytoplasmic portion of the chain corresponds to 290–638 (KQQRIKMLIL…STDQLNKIMQ (349 aa)). Positions 295-380 (KMLILPPVPV…QEKSAGILGA (86 aa)) are required for JAK2 binding. The short motif at 298 to 306 (ILPPVPVPK) is the Box 1 motif element. Positions 341-350 (DSWVEFIELD) match the UbE motif motif. Position 342 is a phosphoserine (Ser342). The interval 357–389 (KTEESDTDRLLSDDQEKSAGILGAKDDDSGRTS) is disordered. The span at 363-373 (TDRLLSDDQEK) shows a compositional bias: basic and acidic residues. 2 positions are modified to phosphotyrosine: Tyr487 and Tyr594.

Belongs to the type I cytokine receptor family. Type 1 subfamily. As to quaternary structure, on growth hormone (GH) binding, forms homodimers and binds JAK2 via a box 1-containing domain. In terms of processing, the soluble form (GHBP) is produced by phorbol ester-promoted proteolytic cleavage at the cell surface (shedding) by ADAM17/TACE. Shedding is inhibited by growth hormone (GH) binding to the receptor probably due to a conformational change in GHR rendering the receptor inaccessible to ADAM17. On GH binding, phosphorylated on tyrosine residues in the cytoplasmic domain by JAK2. Phosphorylation on either (or all of) Tyr-534, Tyr-566 and/or Tyr-627 is required for STAT5 activation. Phosphorylation on Tyr-333 would seem necessary for JAK2 activation. Post-translationally, ubiquitinated by the ECS(SOCS2) complex following ligand-binding and phosphorylation by JAK2, leading to its degradation by the proteasome. Regulation by the ECS(SOCS2) complex acts as a negative feedback loop of growth hormone receptor signaling. Ubiquitination is not sufficient for GHR internalization. As to expression, highest expression in liver. Also expressed in heart, kidney and muscle.

The protein resides in the cell membrane. Its subcellular location is the secreted. In terms of biological role, receptor for pituitary gland growth hormone involved in regulating postnatal body growth. On ligand binding, couples to, and activates the JAK2/STAT5 pathway. Its function is as follows. Receptor for pituitary gland growth hormone (GH1) involved in regulating postnatal body growth. On ligand binding, couples to the JAK2/STAT5 pathway. Functionally, the soluble form (GHBP) acts as a reservoir of growth hormone in plasma and may be a modulator/inhibitor of GH signaling. The polypeptide is Growth hormone receptor (Ghr) (Rattus norvegicus (Rat)).